The sequence spans 357 residues: UDP-N-acetylglucosamine--N-acetylmuramyl-(pentapeptide) pyrophosphoryl-undecaprenol N-acetylglucosamine transferase (357 aa).

Residues threonine 10–glycine 12, asparagine 124, serine 189, isoleucine 244, and glutamine 289 contribute to the UDP-N-acetyl-alpha-D-glucosamine site.

Belongs to the glycosyltransferase 28 family. MurG subfamily.

It is found in the cell membrane. It carries out the reaction Mur2Ac(oyl-L-Ala-gamma-D-Glu-L-Lys-D-Ala-D-Ala)-di-trans,octa-cis-undecaprenyl diphosphate + UDP-N-acetyl-alpha-D-glucosamine = beta-D-GlcNAc-(1-&gt;4)-Mur2Ac(oyl-L-Ala-gamma-D-Glu-L-Lys-D-Ala-D-Ala)-di-trans,octa-cis-undecaprenyl diphosphate + UDP + H(+). Its pathway is cell wall biogenesis; peptidoglycan biosynthesis. Functionally, cell wall formation. Catalyzes the transfer of a GlcNAc subunit on undecaprenyl-pyrophosphoryl-MurNAc-pentapeptide (lipid intermediate I) to form undecaprenyl-pyrophosphoryl-MurNAc-(pentapeptide)GlcNAc (lipid intermediate II). The polypeptide is UDP-N-acetylglucosamine--N-acetylmuramyl-(pentapeptide) pyrophosphoryl-undecaprenol N-acetylglucosamine transferase (Lactococcus lactis subsp. lactis (strain IL1403) (Streptococcus lactis)).